The chain runs to 205 residues: Methylthioribulose-1-phosphate dehydratase (205 aa).

Zn(2+) is bound by residues His96 and His98.

The protein belongs to the aldolase class II family. MtnB subfamily. It depends on Zn(2+) as a cofactor.

The catalysed reaction is 5-(methylsulfanyl)-D-ribulose 1-phosphate = 5-methylsulfanyl-2,3-dioxopentyl phosphate + H2O. Its pathway is amino-acid biosynthesis; L-methionine biosynthesis via salvage pathway; L-methionine from S-methyl-5-thio-alpha-D-ribose 1-phosphate: step 2/6. In terms of biological role, catalyzes the dehydration of methylthioribulose-1-phosphate (MTRu-1-P) into 2,3-diketo-5-methylthiopentyl-1-phosphate (DK-MTP-1-P). This Exiguobacterium sp. (strain ATCC BAA-1283 / AT1b) protein is Methylthioribulose-1-phosphate dehydratase.